The chain runs to 95 residues: Protein TusB (95 aa).

The protein belongs to the DsrH/TusB family. Heterohexamer, formed by a dimer of trimers. The hexameric TusBCD complex contains 2 copies each of TusB, TusC and TusD. The TusBCD complex interacts with TusE.

It localises to the cytoplasm. Part of a sulfur-relay system required for 2-thiolation of 5-methylaminomethyl-2-thiouridine (mnm(5)s(2)U) at tRNA wobble positions. This chain is Protein TusB, found in Enterobacter sp. (strain 638).